Reading from the N-terminus, the 313-residue chain is Porphobilinogen deaminase (313 aa).

Cysteine 242 carries the post-translational modification S-(dipyrrolylmethanemethyl)cysteine.

It belongs to the HMBS family. In terms of assembly, monomer. Dipyrromethane is required as a cofactor.

It carries out the reaction 4 porphobilinogen + H2O = hydroxymethylbilane + 4 NH4(+). The protein operates within porphyrin-containing compound metabolism; protoporphyrin-IX biosynthesis; coproporphyrinogen-III from 5-aminolevulinate: step 2/4. Functionally, tetrapolymerization of the monopyrrole PBG into the hydroxymethylbilane pre-uroporphyrinogen in several discrete steps. The polypeptide is Porphobilinogen deaminase (Pseudomonas syringae pv. syringae (strain B728a)).